The sequence spans 286 residues: Zinc finger protein ZAT5 (286 aa).

Disordered stretches follow at residues 1–28 (MMMG…RSSS), 40–60 (STSS…EYNS), and 131–171 (GGHR…FKVS). A C2H2-type 1 zinc finger spans residues 115–137 (YECKTCNRTFSSFQALGGHRASH). Residues 154 to 171 (QPKSSASEEGQNSHFKVS) show a composition bias toward polar residues. The C2H2-type 2 zinc-finger motif lies at 190 to 212 (HECSICGSEFTSGQALGGHMRRH).

In terms of tissue distribution, expressed in flowers and siliques.

It localises to the nucleus. In terms of biological role, probable transcription factor that may be involved in stress responses. In Arabidopsis thaliana (Mouse-ear cress), this protein is Zinc finger protein ZAT5 (ZAT5).